The sequence spans 276 residues: MFVPFLIMLREGLEAALIVSLIASYLKRTQRGMXDCVMWIGVLLAAALCLGLGIFINETTGEFPQKEQELFEGIVAVIAVVILTWMVFWMRKVSRNVKVQLEQAVDSALQRGNHHGWALVMMVFFAVAREGLESVFFLLAAFQQDVGIWPPLGAMLGLATAVVLGFLLYWGGIRLNLGAFFKWTSLFILFVAAGLAAGAIRAFHEAGLWNHFQEIAFDMSAVLSTHSLFGTLMEGIFGYQEAPSVSEVAVWFIYLIPALVAFALPPRAGATASRSA.

A topological domain (periplasmic) is located at residue M1. A helical transmembrane segment spans residues 2–22 (FVPFLIMLREGLEAALIVSLI). Over 23–35 (ASYLKRTQRGMXD) the chain is Cytoplasmic. The helical transmembrane segment at 36 to 56 (CVMWIGVLLAAALCLGLGIFI) threads the bilayer. The Periplasmic segment spans residues 57–69 (NETTGEFPQKEQE). The helical transmembrane segment at 70 to 90 (LFEGIVAVIAVVILTWMVFWM) threads the bilayer. Residues 91–118 (RKVSRNVKVQLEQAVDSALQRGNHHGWA) are Cytoplasmic-facing. The chain crosses the membrane as a helical span at residues 119 to 139 (LVMMVFFAVAREGLESVFFLL). Residues 140–147 (AAFQQDVG) are Periplasmic-facing. Residues 148-168 (IWPPLGAMLGLATAVVLGFLL) form a helical membrane-spanning segment. The Cytoplasmic portion of the chain corresponds to 169 to 179 (YWGGIRLNLGA). The chain crosses the membrane as a helical span at residues 180–200 (FFKWTSLFILFVAAGLAAGAI). Over 201–244 (RAFHEAGLWNHFQEIAFDMSAVLSTHSLFGTLMEGIFGYQEAPS) the chain is Periplasmic. A helical transmembrane segment spans residues 245-265 (VSEVAVWFIYLIPALVAFALP). At 266–276 (PRAGATASRSA) the chain is on the cytoplasmic side.

This sequence belongs to the oxidase-dependent Fe transporter (OFeT) (TC 9.A.10.1) family. In terms of assembly, part of a ferrous iron transporter composed of EfeU, EfeO and EfeB. However, this EfeUOB tripartite iron transporter is defective in E.coli strain K12 due to a frameshift mutation in EfeU.

The protein localises to the cell inner membrane. The sequence is that of Putative inactive ferrous iron permease EfeU (efeU) from Escherichia coli (strain K12).